The following is a 536-amino-acid chain: SNW domain-containing protein 1 (536 aa).

The segment at 1–46 (MALTSFLPAPTQLSQDQLEAEEKARSQRSRQTSLVSSRREPPPYGY) is disordered. Ala-2 is modified (N-acetylalanine). The residue at position 14 (Ser-14) is a Phosphoserine. Residue Lys-23 forms a Glycyl lysine isopeptide (Lys-Gly) (interchain with G-Cter in SUMO2) linkage. The interaction with PPIL1 stretch occupies residues 59-79 (GDGGAFPEIHVAQYPLDMGRK). Residues Lys-81, Lys-97, Lys-115, Lys-122, Lys-141, Lys-158, and Lys-170 each participate in a glycyl lysine isopeptide (Lys-Gly) (interchain with G-Cter in SUMO2) cross-link. An SNW region spans residues 174–339 (AQYIRYTPSQ…KARERRAGIK (166 aa)). Ser-182 and Ser-190 each carry phosphoserine. Lys-193 participates in a covalent cross-link: Glycyl lysine isopeptide (Lys-Gly) (interchain with G-Cter in SUMO2). Residues 209-234 (PPRFKINKKIPRGPPSPPAPVMHSPS) are disordered. A phosphoserine mark is found at Ser-224, Ser-232, and Ser-234. Glycyl lysine isopeptide (Lys-Gly) (interchain with G-Cter in SUMO2) cross-links involve residues Lys-240, Lys-258, Lys-286, Lys-339, Lys-344, Lys-416, and Lys-441. A disordered region spans residues 311–386 (KMAQKEKEKH…RSKLQRNENR (76 aa)). At Ser-446 the chain carries Phosphoserine. A Glycyl lysine isopeptide (Lys-Gly) (interchain with G-Cter in SUMO2) cross-link involves residue Lys-452. 2 stretches are compositionally biased toward basic and acidic residues: residues 469–489 (TNRF…RGRE) and 503–530 (KFLE…EHEG). The interval 469-536 (TNRFVPDKEF…EHEGKKRRKE (68 aa)) is disordered. Phosphoserine occurs at positions 479 and 481. Lys-509 is covalently cross-linked (Glycyl lysine isopeptide (Lys-Gly) (interchain with G-Cter in SUMO2)).

It belongs to the SNW family. As to quaternary structure, identified in the spliceosome C complex. Associates with U4/U6-U5 tri-small nuclear ribonucleoproteins (U4/U6-U5 tri-snRNPs). Component of the minor spliceosome, which splices U12-type introns. Interacts with SKI, SMAD2,SMAD3, RBPJ, RB1, PABPN1, MAGEA1, SIRT1, FOXN3, U2AF2, PPIL1, DAXX and ATP1B4. Interacts with VDR and RXRA; preferentially associates with VDR:RXRA heterodimers. Interacts with NCOR2. Interacts with MAML1. Interacts with NOTCH1 NICD; the interaction involves multimerized NOTCH1 NICD. Forms a complex with NOTCH1 NICD and MAML1; the association is dissociated by RBPJ. Associates with positive transcription elongation factor b (P-TEFb). Component of the SNARP complex which consists at least of SNIP1, SNW1, THRAP3, BCLAF1 and PNN.

It is found in the nucleus. Its function is as follows. Involved in pre-mRNA splicing as component of the spliceosome. As a component of the minor spliceosome, involved in the splicing of U12-type introns in pre-mRNAs. Required in the specific splicing of CDKN1A pre-mRNA; the function probably involves the recruitment of U2AF2 to the mRNA. May recruit PPIL1 to the spliceosome. May be involved in cyclin-D1/CCND1 mRNA stability through the SNARP complex which associates with both the 3'end of the CCND1 gene and its mRNA. Involved in transcriptional regulation. Modulates TGF-beta-mediated transcription via association with SMAD proteins, MYOD1-mediated transcription via association with PABPN1, RB1-mediated transcriptional repression, and retinoid-X receptor (RXR)- and vitamin D receptor (VDR)-dependent gene transcription in a cell line-specific manner probably involving coactivators NCOA1 and GRIP1. Is involved in NOTCH1-mediated transcriptional activation. Binds to multimerized forms of Notch intracellular domain (NICD) and is proposed to recruit transcriptional coactivators such as MAML1 to form an intermediate preactivation complex which associates with DNA-bound CBF-1/RBPJ to form a transcriptional activation complex by releasing SNW1 and redundant NOTCH1 NICD. In Pongo abelii (Sumatran orangutan), this protein is SNW domain-containing protein 1 (SNW1).